Reading from the N-terminus, the 530-residue chain is Pentatricopeptide repeat-containing protein At3g51320 (530 aa).

PPR repeat units lie at residues 82-116 (KLYCANPVFKAYLVSSSPKQALGFYFDILRFGFVP), 117-151 (DSYTFVSLISCIEKTCCVDSGKMCHGQAIKHGCDQ), 152-182 (VLPVQNSLMHMYTCCGALDLAKKLFVEIPKR), 183-217 (DIVSWNSIIAGMVRNGDVLAAHKLFDEMPDKNIIS), 218-248 (WNIMISAYLGANNPGVSISLFREMVRAGFQG), 249-283 (NESTLVLLLNACGRSARLKEGRSVHASLIRTFLNS), 284-314 (SVVIDTALIDMYGKCKEVGLARRIFDSLSIR), 315-349 (NKVTWNVMILAHCLHGRPEGGLELFEAMINGMLRP), 350-380 (DEVTFVGVLCGCARAGLVSQGQSYYSLMVDE), and 386-420 (NFGHQWCMANLYSSAGFPEEAEEALKNLPDEDVTP). The tract at residues 424 to 499 (KWANLLSSSR…IPGCGLVDLK (76 aa)) is type E motif.

It belongs to the PPR family. PCMP-E subfamily.

The chain is Pentatricopeptide repeat-containing protein At3g51320 from Arabidopsis thaliana (Mouse-ear cress).